We begin with the raw amino-acid sequence, 165 residues long: ATP synthase subunit delta, mitochondrial (165 aa).

The N-terminal 27 residues, 1 to 27 (MNSLRIARAALRVRPTAVRAPLQRRGY), are a transit peptide targeting the mitochondrion.

Belongs to the ATPase epsilon chain family. F-type ATPases have 2 components, CF(1) - the catalytic core - and CF(0) - the membrane proton channel. CF(1) has five subunits: alpha(3), beta(3), gamma(1), delta(1), epsilon(1). CF(0) has three main subunits: a, b and c.

It localises to the mitochondrion. The protein localises to the mitochondrion inner membrane. In terms of biological role, mitochondrial membrane ATP synthase (F(1)F(0) ATP synthase or Complex V) produces ATP from ADP in the presence of a proton gradient across the membrane which is generated by electron transport complexes of the respiratory chain. F-type ATPases consist of two structural domains, F(1) - containing the extramembraneous catalytic core, and F(0) - containing the membrane proton channel, linked together by a central stalk and a peripheral stalk. During catalysis, ATP turnover in the catalytic domain of F(1) is coupled via a rotary mechanism of the central stalk subunits to proton translocation. Part of the complex F(1) domain and of the central stalk which is part of the complex rotary element. Rotation of the central stalk against the surrounding alpha(3)beta(3) subunits leads to hydrolysis of ATP in three separate catalytic sites on the beta subunits. The sequence is that of ATP synthase subunit delta, mitochondrial (des) from Neurospora crassa (strain ATCC 24698 / 74-OR23-1A / CBS 708.71 / DSM 1257 / FGSC 987).